Reading from the N-terminus, the 587-residue chain is MEPVDRMRELLSFIYGPETGRDTHEALHALLDGWRGRLPSPDEEYASGRLPLDHTDAVLITYGDQFGRKGEAPLATLGEFLREYLSGTMKGVHILPFFPYSSDDGFSVMDYRRVNPEWGTWDDVRRISEDFRLMVDLVLNHCSAKSEWFRRFLQGDPEYEDFFITVEPGTDLSGVFRPRALPLVHEFESAKGPVLVWTTFSRDQVDLNYANPRVLLEMIDIFLFYVSQGAQIIRLDAIAYLWKELGTPCIHHPKTHAVVKLFRAICEEVCPWVLIITETNVPHKENISYFGDMDEAHLVYQFALPPLVLDAFLRKDVSYLREWARTIDTYGGKVSYFNFLASHDGIGVLPARGILPDEYIDAMIEAVKDRGGLISYKSTPQGEVPYELNINYLSAISESHLDRPTRARKFLASQAVMLSLVGMPGIYVHSLLGSENWREGVEKTGMNRTINRQKLSYEGVLEELRDPESLRSMVFEGYLDMLAARRKSRAFDPRGMQEVLEAPETVFALLRRSPDATEEVLCLINVSHIEQECVFPSSIFRTAPDAHLFTELTSGDTLVPYREDEDRFSISLGGYEVLWLTPYRDKG.

D236 functions as the Nucleophile in the catalytic mechanism.

The protein belongs to the glycosyl hydrolase 13 family. Glucosylglycerate phosphorylase subfamily.

The catalysed reaction is (2R)-2-O-(alpha-D-glucopyranosyl)-glycerate + phosphate = (R)-glycerate + alpha-D-glucose 1-phosphate. Functionally, catalyzes the reversible phosphorolysis of glucosylglycerate into alpha-D-glucose 1-phosphate (Glc1P) and D-glycerate. May be a regulator of intracellular levels of glucosylglycerate, a compatible solute that primarily protects organisms facing salt stress and very specific nutritional constraints. Cannot catalyze the phosphorolysis of sucrose. This is Glucosylglycerate phosphorylase from Spirochaeta thermophila (strain ATCC 700085 / DSM 6578 / Z-1203).